The sequence spans 409 residues: Tetracenomycin polyketide synthase ketoacyl synthase beta subunit (409 aa).

Residues 4-407 form the Ketosynthase family 3 (KS3) domain; it reads PAPVVVTGLG…GFNSALVVRR (404 aa).

This sequence belongs to the thiolase-like superfamily. Beta-ketoacyl-ACP synthases family. The tetracenomycin polyketide synthase (TCM PKS) is composed of a ketosynthase complex (TcmKL), an acyl carrier protein (TcmM), a cyclase (TcmN) and a probable second cyclase (TcmJ). TcmK and TcmL form a heterodimeric complex.

It catalyses the reaction 10 malonyl-CoA + 8 H(+) = tetracenomycin F2 + 10 CO2 + 10 CoA + 2 H2O. It functions in the pathway antibiotic biosynthesis; tetracenomycin C biosynthesis. Involved in the biosynthesis of tetracenomycin C (TCM C). Part of a type II polyketide synthase (PKS) that catalyzes the synthesis of tetracenomycin F2 (TCM F2), a precursor of TCM C, from malonyl-CoA. TcmK and TcmL form a heterodimeric alpha-beta complex that catalyzes the condensation reactions between the growing acyl-enzyme chain and the malonyl-CoA extender units. The protein is Tetracenomycin polyketide synthase ketoacyl synthase beta subunit of Streptomyces glaucescens.